The following is a 278-amino-acid chain: Putative ABC transporter ATP-binding protein MTBMA_c05830 (278 aa).

Residues 4 to 239 form the ABC transporter domain; the sequence is IEAVNIRYTY…IDTIRGADLR (236 aa). 37 to 44 contacts ATP; it reads GPNGAGKS.

It belongs to the ABC transporter superfamily.

Its subcellular location is the cell membrane. Functionally, probably part of an ABC transporter complex. Responsible for energy coupling to the transport system. In Methanothermobacter marburgensis (strain ATCC BAA-927 / DSM 2133 / JCM 14651 / NBRC 100331 / OCM 82 / Marburg) (Methanobacterium thermoautotrophicum), this protein is Putative ABC transporter ATP-binding protein MTBMA_c05830.